The following is a 520-amino-acid chain: Putative lipase ATG15 (520 aa).

At 1-14 the chain is on the cytoplasmic side; it reads MLHKSPSRKRFASP. Residues 15–35 form a helical; Signal-anchor for type II membrane protein membrane-spanning segment; the sequence is LHLGCILTLTVLCLIAYYFAL. Residues 36-520 are Lumenal-facing; it reads PDYLSVGKSS…WLGFCTKYEL (485 aa). 3 N-linked (GlcNAc...) asparagine glycosylation sites follow: asparagine 173, asparagine 202, and asparagine 208. The Charge relay system role is filled by serine 332.

Belongs to the AB hydrolase superfamily. Lipase family. In terms of assembly, binds to both phosphatidylinositol (PI) and phosphatidylinositol 3,5-bisphosphate (PIP2).

The protein localises to the endosome. The protein resides in the multivesicular body membrane. It is found in the prevacuolar compartment membrane. It catalyses the reaction a triacylglycerol + H2O = a diacylglycerol + a fatty acid + H(+). Its function is as follows. Lipase which is essential for lysis of subvacuolar cytoplasm to vacuole targeted bodies and intravacuolar autophagic bodies. Involved in the lysis of intravacuolar multivesicular body (MVB) vesicles. The intravacuolar membrane disintegration by ATG15 is critical to life span extension. This chain is Putative lipase ATG15 (ATG15), found in Saccharomyces cerevisiae (strain YJM789) (Baker's yeast).